The chain runs to 1653 residues: Protein strawberry notch (1653 aa).

Disordered regions lie at residues 1 to 46 (MTSK…GRDL), 190 to 211 (GSPA…GGAI), 237 to 265 (GSNA…PNPG), 317 to 345 (NNQK…VKGN), and 883 to 1043 (SVAD…PSGS). Residues 11-36 (DADDDNDNFDEDDSGSDFDDDEDPDQ) show a composition bias toward acidic residues. A phosphoserine mark is found at serine 24 and serine 26. Over residues 194 to 205 (ARSSGNAGTTGS) the composition is skewed to polar residues. A compositionally biased stretch (low complexity) spans 256 to 265 (SPTGGIPNPG). Gly residues predominate over residues 329–342 (GSGGPAGGAPGSGV). Residues 883-901 (SVADSTSSLSNNSNITTAA) are compositionally biased toward low complexity. A phosphoserine mark is found at serine 929 and serine 931. Over residues 966–975 (IDDEDEDHDV) the composition is skewed to acidic residues. Positions 980-998 (RSVASDASSDFNPFFSGSD) are enriched in polar residues. Over residues 1008-1027 (RSKKSKKAQKKSKKKVKKEK) the composition is skewed to basic residues. A coiled-coil region spans residues 1064–1125 (LSTQDKIQDL…RKIERLGARL (62 aa)).

Belongs to the SBNO family. In terms of assembly, interacts with vg for function in the wing disk. Interacts with Su(H) for function in the eye disk. In terms of tissue distribution, at stage 8, when the formation of the midline precursor cells depends on Notch signaling, high level of expression is seen in the midline precursor cells and a lower level in the surrounding epidermal cells. Between stages 11 and 14, expression is uniform throughout the epidermis, and at stage 16, high level of expression is restricted to the central nervous system. Expressed in the larval leg, wing and eye imaginal disks. Expression is over the wing disk and accumulates within the pleural region.

Its subcellular location is the nucleus. Notch pathway component, may contribute to the specificity between lateral and inductive Notch signaling pathways in the wing disk. Required during many developmental stages including oogenesis, embryogenesis and imaginal development of the eye, wing and leg. Ebi and sno regulate EGFR-dependent Delta transcription in the developing eye, by antagonizing a repressor function of Suppressor of Hairless (Su(H)). They are required in the R-cells for normal cone cell development. The protein is Protein strawberry notch of Drosophila melanogaster (Fruit fly).